We begin with the raw amino-acid sequence, 227 residues long: Cytochrome c oxidase subunit 2 (227 aa).

At 1–14 (MAYPFELGFQDATS) the chain is on the mitochondrial intermembrane side. Residues 15-45 (PIMEELLHFHDHTLMIVFLISSLVLYIISLM) form a helical membrane-spanning segment. At 46–59 (LTTKLTHTSTMDAQ) the chain is on the mitochondrial matrix side. A helical transmembrane segment spans residues 60–87 (EVETIWTILPAIILILIALPSLRILYMM). Over 88–227 (DEINDPSLTV…HFENWSSSML (140 aa)) the chain is Mitochondrial intermembrane. His161, Cys196, Glu198, Cys200, His204, and Met207 together coordinate Cu cation. Glu198 is a Mg(2+) binding site.

Belongs to the cytochrome c oxidase subunit 2 family. As to quaternary structure, component of the cytochrome c oxidase (complex IV, CIV), a multisubunit enzyme composed of 14 subunits. The complex is composed of a catalytic core of 3 subunits MT-CO1, MT-CO2 and MT-CO3, encoded in the mitochondrial DNA, and 11 supernumerary subunits COX4I, COX5A, COX5B, COX6A, COX6B, COX6C, COX7A, COX7B, COX7C, COX8 and NDUFA4, which are encoded in the nuclear genome. The complex exists as a monomer or a dimer and forms supercomplexes (SCs) in the inner mitochondrial membrane with NADH-ubiquinone oxidoreductase (complex I, CI) and ubiquinol-cytochrome c oxidoreductase (cytochrome b-c1 complex, complex III, CIII), resulting in different assemblies (supercomplex SCI(1)III(2)IV(1) and megacomplex MCI(2)III(2)IV(2)). Found in a complex with TMEM177, COA6, COX18, COX20, SCO1 and SCO2. Interacts with TMEM177 in a COX20-dependent manner. Interacts with COX20. Interacts with COX16. Cu cation serves as cofactor.

It localises to the mitochondrion inner membrane. It catalyses the reaction 4 Fe(II)-[cytochrome c] + O2 + 8 H(+)(in) = 4 Fe(III)-[cytochrome c] + 2 H2O + 4 H(+)(out). In terms of biological role, component of the cytochrome c oxidase, the last enzyme in the mitochondrial electron transport chain which drives oxidative phosphorylation. The respiratory chain contains 3 multisubunit complexes succinate dehydrogenase (complex II, CII), ubiquinol-cytochrome c oxidoreductase (cytochrome b-c1 complex, complex III, CIII) and cytochrome c oxidase (complex IV, CIV), that cooperate to transfer electrons derived from NADH and succinate to molecular oxygen, creating an electrochemical gradient over the inner membrane that drives transmembrane transport and the ATP synthase. Cytochrome c oxidase is the component of the respiratory chain that catalyzes the reduction of oxygen to water. Electrons originating from reduced cytochrome c in the intermembrane space (IMS) are transferred via the dinuclear copper A center (CU(A)) of subunit 2 and heme A of subunit 1 to the active site in subunit 1, a binuclear center (BNC) formed by heme A3 and copper B (CU(B)). The BNC reduces molecular oxygen to 2 water molecules using 4 electrons from cytochrome c in the IMS and 4 protons from the mitochondrial matrix. The sequence is that of Cytochrome c oxidase subunit 2 (MT-CO2) from Tamias merriami (Merriam's chipmunk).